A 129-amino-acid polypeptide reads, in one-letter code: SMNGVVDERMSFKAGQNLTVKGVPSIDSTNFAINVGNSAEDLALHINPRFDAHGDQQAVVVNSFQGGNWGTEQREGGFPFKQGEDFKIQITFNSEEFRIILPDGSEIHFPNNRYMHFEGEARIYSIEIK.

N-acetylserine is present on Ser1. Positions 4–129 constitute a Galectin domain; sequence GVVDERMSFK…EARIYSIEIK (126 aa). 69–75 serves as a coordination point for a beta-D-galactoside; that stretch reads WGTEQRE.

Functionally, this protein binds beta-galactoside. Its physiological function is not yet known. The protein is Beta-galactoside-binding lectin of Electrophorus electricus (Electric eel).